The chain runs to 255 residues: 1-(5-phosphoribosyl)-5-[(5-phosphoribosylamino)methylideneamino] imidazole-4-carboxamide isomerase (255 aa).

The active-site Proton acceptor is Asp-8. Asp-129 serves as the catalytic Proton donor.

It belongs to the HisA/HisF family.

It localises to the cytoplasm. The enzyme catalyses 1-(5-phospho-beta-D-ribosyl)-5-[(5-phospho-beta-D-ribosylamino)methylideneamino]imidazole-4-carboxamide = 5-[(5-phospho-1-deoxy-D-ribulos-1-ylimino)methylamino]-1-(5-phospho-beta-D-ribosyl)imidazole-4-carboxamide. The protein operates within amino-acid biosynthesis; L-histidine biosynthesis; L-histidine from 5-phospho-alpha-D-ribose 1-diphosphate: step 4/9. The sequence is that of 1-(5-phosphoribosyl)-5-[(5-phosphoribosylamino)methylideneamino] imidazole-4-carboxamide isomerase from Prochlorococcus marinus (strain MIT 9303).